The sequence spans 179 residues: Protein GrpE (179 aa).

Residues 1 to 23 are disordered; sequence MSEEIKEQNVQDAQNENLAPDSV.

Belongs to the GrpE family. Homodimer.

It is found in the cytoplasm. In terms of biological role, participates actively in the response to hyperosmotic and heat shock by preventing the aggregation of stress-denatured proteins, in association with DnaK and GrpE. It is the nucleotide exchange factor for DnaK and may function as a thermosensor. Unfolded proteins bind initially to DnaJ; upon interaction with the DnaJ-bound protein, DnaK hydrolyzes its bound ATP, resulting in the formation of a stable complex. GrpE releases ADP from DnaK; ATP binding to DnaK triggers the release of the substrate protein, thus completing the reaction cycle. Several rounds of ATP-dependent interactions between DnaJ, DnaK and GrpE are required for fully efficient folding. The polypeptide is Protein GrpE (Campylobacter curvus (strain 525.92)).